The chain runs to 380 residues: MPTESLQTGSMVKPVSPAGTFTSAVPLRILNKGPDYFRRQAEPNPKRLSAVERLEADKAKYVKSQEVINAKQEPVKPAVLAKPPVCPAAKRALGSPTLKGFGGGGGGAKSEGGAPRETLKLEILKNILNSSEGSSTGSGHKHSARNWPAPRADAAELHRHSFAESLRARPAPGRGSPQEGGSHVGRRPPEPTSSAAAAADAFLHVSHSSSDIRQGPGARPLKAILPCSSSAPPLPPKPKVAAPAAVKSPEAEAAEPAGGVGRRPSLQRSKSDLSDRYFRVDADVERFFNYCGLDPEELENLGMENFARANSDIISLNFRSASMISSDCEQSQDSNSDLRNDDSANDRVPYGISAIERNARIIKWLYSIKQARESQKVSHV.

Residues 92-272 (ALGSPTLKGF…RPSLQRSKSD (181 aa)) form a disordered region. Residues 100–110 (GFGGGGGGAKS) are compositionally biased toward gly residues. Positions 127 to 138 (ILNSSEGSSTGS) are enriched in polar residues. Over residues 153–162 (DAAELHRHSF) the composition is skewed to basic and acidic residues. A compositionally biased stretch (low complexity) spans 239–248 (KVAAPAAVKS). Phosphoserine is present on residues S248 and S311. The segment at 327–347 (DCEQSQDSNSDLRNDDSANDR) is disordered. Positions 336–345 (SDLRNDDSAN) are enriched in basic and acidic residues.

The protein belongs to the FAM110 family.

It is found in the cytoplasm. The protein localises to the cytoskeleton. The protein resides in the microtubule organizing center. It localises to the centrosome. The chain is Protein FAM110B (FAM110B) from Bos taurus (Bovine).